The chain runs to 249 residues: Small ribosomal subunit protein uS3 (249 aa).

In terms of domain architecture, KH type-2 spans 39 to 109 (IRTYVLARLK…EVKIDVVEVV (71 aa)). Positions 226-239 (KERRNDAGARNRDS) are enriched in basic and acidic residues. The tract at residues 226–249 (KERRNDAGARNRDSRTKRRHRTKR) is disordered. Residues 240–249 (RTKRRHRTKR) show a composition bias toward basic residues.

This sequence belongs to the universal ribosomal protein uS3 family. As to quaternary structure, part of the 30S ribosomal subunit. Forms a tight complex with proteins S10 and S14.

In terms of biological role, binds the lower part of the 30S subunit head. Binds mRNA in the 70S ribosome, positioning it for translation. This chain is Small ribosomal subunit protein uS3, found in Pelodictyon phaeoclathratiforme (strain DSM 5477 / BU-1).